Here is a 169-residue protein sequence, read N- to C-terminus: Ribosome maturation factor RimM (169 aa).

A PRC barrel domain is found at 97–169 (EDEYYWTDLV…IITADWGLDY (73 aa)).

It belongs to the RimM family. Binds ribosomal protein uS19.

It is found in the cytoplasm. Functionally, an accessory protein needed during the final step in the assembly of 30S ribosomal subunit, possibly for assembly of the head region. Essential for efficient processing of 16S rRNA. May be needed both before and after RbfA during the maturation of 16S rRNA. It has affinity for free ribosomal 30S subunits but not for 70S ribosomes. The sequence is that of Ribosome maturation factor RimM from Neisseria meningitidis serogroup C / serotype 2a (strain ATCC 700532 / DSM 15464 / FAM18).